Reading from the N-terminus, the 639-residue chain is Tetracycline resistance protein TetM from transposon Tn5251 (639 aa).

Positions 1–242 constitute a tr-type G domain; that stretch reads MKIINIGVLA…VITNKFYSST (242 aa). GTP is bound by residues 10-17, 74-78, and 128-131; these read AHVDAGKT, DTPGH, and NKID.

Belongs to the TRAFAC class translation factor GTPase superfamily. Classic translation factor GTPase family. TetM/TetO subfamily.

Functionally, abolishes the inhibitory effect of tetracyclin on protein synthesis by a non-covalent modification of the ribosomes. This is Tetracycline resistance protein TetM from transposon Tn5251 (tetM(5251)) from Streptococcus pneumoniae.